A 400-amino-acid chain; its full sequence is Keratin, type I cytoskeletal 19 (400 aa).

A head region spans residues 1–79; it reads MTSYSYRQSS…TASDGLLAGN (79 aa). An Omega-N-methylarginine modification is found at R7. Residues S14 and S22 each carry the phosphoserine modification. Asymmetric dimethylarginine; alternate is present on R24. Residue R24 is modified to Omega-N-methylarginine; alternate. R32 bears the Omega-N-methylarginine mark. Residues S35 and S40 each carry the phosphoserine modification. R43 and R51 each carry omega-N-methylarginine. Phosphoserine occurs at positions 57 and 72. A coil 1A region spans residues 80 to 115; the sequence is EKLTMQNLNDRLASYLDKVRALEAANGELEVKIRDW. Positions 80–391 constitute an IF rod domain; that stretch reads EKLTMQNLND…SLLEGQEDHY (312 aa). The interval 116–133 is linker 1; sequence YQKQGPGPSRDYSHYYTT. The segment at 134-225 is coil 1B; sequence IQDLRDKILG…KNHEEEISTL (92 aa). Residues 226–248 are linker 12; the sequence is RGQVGGQVSVEVDSAPGTDLAKI. Residues 244 to 390 form a necessary for interaction with PNN region; it reads DLAKILSDMR…RSLLEGQEDH (147 aa). Positions 249 to 387 are coil 2; it reads LSDMRSQYEV…ATYRSLLEGQ (139 aa). Phosphothreonine is present on T323. The tract at residues 388–400 is rod-like helical tail; it reads EDHYNNLSASKVL. Y391 bears the Phosphotyrosine mark. 2 positions are modified to phosphoserine: S395 and S397.

Belongs to the intermediate filament family. Heterotetramer of two type I and two type II keratins. Interacts with PNN and the actin-binding domain of DMD. Interacts with HCV core protein. In terms of assembly, (Microbial infection) Interacts with hepatitis C virus/HCV core protein. Expressed in a defined zone of basal keratinocytes in the deep outer root sheath of hair follicles. Also observed in sweat gland and mammary gland ductal and secretory cells, bile ducts, gastrointestinal tract, bladder urothelium, oral epithelia, esophagus, ectocervical epithelium (at protein level). Expressed in epidermal basal cells, in nipple epidermis and a defined region of the hair follicle. Also seen in a subset of vascular wall cells in both the veins and artery of human umbilical cord, and in umbilical cord vascular smooth muscle. Observed in muscle fibers accumulating in the costameres of myoplasm at the sarcolemma in structures that contain dystrophin and spectrin.

Involved in the organization of myofibers. Together with KRT8, helps to link the contractile apparatus to dystrophin at the costameres of striated muscle. This chain is Keratin, type I cytoskeletal 19 (KRT19), found in Homo sapiens (Human).